A 464-amino-acid chain; its full sequence is Soluble pyridine nucleotide transhydrogenase (464 aa).

35 to 44 lines the FAD pocket; the sequence is DSRREVGGNC.

It belongs to the class-I pyridine nucleotide-disulfide oxidoreductase family. It depends on FAD as a cofactor.

Its subcellular location is the cytoplasm. It carries out the reaction NAD(+) + NADPH = NADH + NADP(+). In terms of biological role, conversion of NADPH, generated by peripheral catabolic pathways, to NADH, which can enter the respiratory chain for energy generation. The polypeptide is Soluble pyridine nucleotide transhydrogenase (Pseudomonas syringae pv. tomato (strain ATCC BAA-871 / DC3000)).